The chain runs to 703 residues: Polyribonucleotide nucleotidyltransferase (703 aa).

Mg(2+) is bound by residues D488 and D494. The KH domain occupies 555–614 (PKIVKMQINPDKIKDVIGPGGKIITKIIDETGVKIDIEQTGEVFISGIEIDMIKKAQELI). One can recognise an S1 motif domain in the interval 624–692 (GKTYKGKVSR…EKGRVNLSRK (69 aa)).

The protein belongs to the polyribonucleotide nucleotidyltransferase family. Mg(2+) is required as a cofactor.

It is found in the cytoplasm. It carries out the reaction RNA(n+1) + phosphate = RNA(n) + a ribonucleoside 5'-diphosphate. Involved in mRNA degradation. Catalyzes the phosphorolysis of single-stranded polyribonucleotides processively in the 3'- to 5'-direction. This Clostridioides difficile (strain 630) (Peptoclostridium difficile) protein is Polyribonucleotide nucleotidyltransferase.